The chain runs to 287 residues: Undecaprenyl-diphosphatase (287 aa).

A run of 7 helical transmembrane segments spans residues 50–70 (PGVS…IAYF), 97–117 (LGFA…GIKF), 131–151 (IPSI…AEQV), 160–180 (VVLG…LLPG), 206–226 (FLLG…DALA), 234–254 (LPLL…IDWL), and 264–284 (WLFV…WGVY).

This sequence belongs to the UppP family.

Its subcellular location is the cell inner membrane. It catalyses the reaction di-trans,octa-cis-undecaprenyl diphosphate + H2O = di-trans,octa-cis-undecaprenyl phosphate + phosphate + H(+). Functionally, catalyzes the dephosphorylation of undecaprenyl diphosphate (UPP). Confers resistance to bacitracin. This Synechococcus sp. (strain CC9605) protein is Undecaprenyl-diphosphatase.